The following is a 483-amino-acid chain: Prenyltransferase vrtC (483 aa).

It belongs to the tryptophan dimethylallyltransferase family.

It participates in secondary metabolite biosynthesis; terpenoid biosynthesis. Prenyltransferase; part of the gene cluster that mediates the biosynthesis of viridicatumtoxin, a tetracycline-like fungal meroterpenoid with a unique, fused spirobicyclic ring system. The first step of the pathway is the production of the malonamoyl-CoA starter unit for the polyketide synthase vrtA. The aldolase vrtJ may be involved in the synthesis of the malonamate substrate for malonamoyl-CoA synthetase vrtB. The polyketide synthase vrtA then may utilize the malonamoyl-CoA starter unit, followed by sequential condensation of eight malonyl-CoA units to form the polyketide backbone. The cyclization of the last ring could be mediated by the lactamase-like protein vrtG. The proposed post-PKS tailoring steps are a hydroxylation at C5 catalyzed the cytochrome P450 monooxygenase vrtE, a hydroxylation at C12a catalyzed by VrtH and/or VrtI, and an O-methylation by the O-methyltransferase vrtF. VrtC is then proposed to catalyze the transfer of a geranyl group synthesized by vrtD to the aromatic C ring of the tetracyclic polyketide intermediate of viridicatumtoxin to yield previridicatumtoxin. Finally, the cytochrome P450 monooxygenase vrtK catalyzes the spirocyclization of the geranyl moiety of previridicatumtoxin to afford viridicatumtoxin. The protein is Prenyltransferase vrtC of Penicillium aethiopicum.